A 262-amino-acid chain; its full sequence is DNA-directed RNA polymerase subunit Rpo3 (262 aa).

It belongs to the archaeal Rpo3/eukaryotic RPB3 RNA polymerase subunit family. In terms of assembly, part of the RNA polymerase complex.

The protein resides in the cytoplasm. It carries out the reaction RNA(n) + a ribonucleoside 5'-triphosphate = RNA(n+1) + diphosphate. In terms of biological role, DNA-dependent RNA polymerase (RNAP) catalyzes the transcription of DNA into RNA using the four ribonucleoside triphosphates as substrates. The protein is DNA-directed RNA polymerase subunit Rpo3 of Pyrobaculum islandicum (strain DSM 4184 / JCM 9189 / GEO3).